Reading from the N-terminus, the 579-residue chain is L-ascorbate oxidase (579 aa).

An N-terminal signal peptide occupies residues 1-30 (MLQMGKAREPNFLILFFFGLILAFGISSEG). 2 consecutive Plastocyanin-like domains span residues 33–152 (IRHY…LIVD) and 164–330 (DGEI…NYLP). 3 cysteine pairs are disulfide-bonded: C49-C231, C111-C568, and C210-C223. Cu cation is bound by residues H90 and H92. A glycan (N-linked (GlcNAc...) asparagine) is linked at N122. Positions 134 and 136 each coordinate Cu cation. N355 and N470 each carry an N-linked (GlcNAc...) asparagine glycan. In terms of domain architecture, Plastocyanin-like 3 spans 374–553 (NRRIFLLNTQ…HMGMGVVFAE (180 aa)). 8 residues coordinate Cu cation: H475, H478, H480, H536, C537, H538, H542, and M547.

Belongs to the multicopper oxidase family. As to quaternary structure, dimer. Requires Cu cation as cofactor.

The protein localises to the secreted. The enzyme catalyses 4 L-ascorbate + O2 = 4 monodehydro-L-ascorbate radical + 2 H2O. Its function is as follows. May be involved in a redox system involving ascorbic acid. This chain is L-ascorbate oxidase (AAO), found in Cucurbita maxima (Pumpkin).